Reading from the N-terminus, the 227-residue chain is MTARPLNELVEEGWARALEPVADQVAQMGEFLRTELAEGRQYLPAGQNVLRAFTFPFDQVRVLIVGQDPYPTPGHAVGLSFSVAPDVRPLPRSLSNIFTEYTEDLGHPQPSSGDLTPWAERGVMLLNRVLTVRPGTPASHRGKGWEAVTECAIRALVAREQPLVAVLWGRDAATLKPMLAEGDCATIESPHPSPLSASRGFFGSRPFSRVNELLQRRGIEPIDWKLP.

Asp68 acts as the Proton acceptor in catalysis.

The protein belongs to the uracil-DNA glycosylase (UDG) superfamily. UNG family.

The protein resides in the cytoplasm. The enzyme catalyses Hydrolyzes single-stranded DNA or mismatched double-stranded DNA and polynucleotides, releasing free uracil.. In terms of biological role, excises uracil residues from the DNA which can arise as a result of misincorporation of dUMP residues by DNA polymerase or due to deamination of cytosine. This Mycolicibacterium smegmatis (strain ATCC 700084 / mc(2)155) (Mycobacterium smegmatis) protein is Uracil-DNA glycosylase.